The sequence spans 199 residues: dITP/XTP pyrophosphatase (199 aa).

8-13 is a substrate binding site; sequence TSNKNK. Mg(2+) is bound by residues E40 and D68. D68 acts as the Proton acceptor in catalysis. Residues S69, 154 to 157, K177, and 182 to 183 each bind substrate; these read FGYD and HR.

The protein belongs to the HAM1 NTPase family. In terms of assembly, homodimer. The cofactor is Mg(2+).

The enzyme catalyses XTP + H2O = XMP + diphosphate + H(+). It catalyses the reaction dITP + H2O = dIMP + diphosphate + H(+). The catalysed reaction is ITP + H2O = IMP + diphosphate + H(+). In terms of biological role, pyrophosphatase that catalyzes the hydrolysis of nucleoside triphosphates to their monophosphate derivatives, with a high preference for the non-canonical purine nucleotides XTP (xanthosine triphosphate), dITP (deoxyinosine triphosphate) and ITP. Seems to function as a house-cleaning enzyme that removes non-canonical purine nucleotides from the nucleotide pool, thus preventing their incorporation into DNA/RNA and avoiding chromosomal lesions. This chain is dITP/XTP pyrophosphatase, found in Wigglesworthia glossinidia brevipalpis.